We begin with the raw amino-acid sequence, 65 residues long: Large ribosomal subunit protein bL35 (65 aa).

2 stretches are compositionally biased toward basic residues: residues 1–15 (MPKM…KRFT) and 26–44 (QAFK…KRQL). Residues 1–65 (MPKMKTKKSA…KSVRAMMPYA (65 aa)) are disordered.

Belongs to the bacterial ribosomal protein bL35 family.

The protein is Large ribosomal subunit protein bL35 of Cupriavidus metallidurans (strain ATCC 43123 / DSM 2839 / NBRC 102507 / CH34) (Ralstonia metallidurans).